The chain runs to 173 residues: Co-chaperone protein HscB (173 aa).

The J domain maps to 2–74 (DYFTLFGLPA…LKRAEYMLSQ (73 aa)).

This sequence belongs to the HscB family. As to quaternary structure, interacts with HscA and stimulates its ATPase activity. Interacts with IscU.

Co-chaperone involved in the maturation of iron-sulfur cluster-containing proteins. Seems to help targeting proteins to be folded toward HscA. The protein is Co-chaperone protein HscB of Xenorhabdus nematophila (strain ATCC 19061 / DSM 3370 / CCUG 14189 / LMG 1036 / NCIMB 9965 / AN6).